We begin with the raw amino-acid sequence, 193 residues long: Peptidyl-tRNA hydrolase (193 aa).

Tyr14 is a tRNA binding site. Catalysis depends on His19, which acts as the Proton acceptor. Phe64, Asn66, and Asn112 together coordinate tRNA.

This sequence belongs to the PTH family. In terms of assembly, monomer.

It localises to the cytoplasm. It carries out the reaction an N-acyl-L-alpha-aminoacyl-tRNA + H2O = an N-acyl-L-amino acid + a tRNA + H(+). Hydrolyzes ribosome-free peptidyl-tRNAs (with 1 or more amino acids incorporated), which drop off the ribosome during protein synthesis, or as a result of ribosome stalling. Its function is as follows. Catalyzes the release of premature peptidyl moieties from peptidyl-tRNA molecules trapped in stalled 50S ribosomal subunits, and thus maintains levels of free tRNAs and 50S ribosomes. This is Peptidyl-tRNA hydrolase from Bartonella henselae (strain ATCC 49882 / DSM 28221 / CCUG 30454 / Houston 1) (Rochalimaea henselae).